The following is a 224-amino-acid chain: Putative adhesin RMA_1308 (224 aa).

A signal peptide spans 1-22 (MQKLLLIAATSATILSSSLSFA).

The polypeptide is Putative adhesin RMA_1308 (Rickettsia massiliae (strain Mtu5)).